Consider the following 138-residue polypeptide: Basic phospholipase A2 myotoxin I (138 aa).

A signal peptide spans 1–16; that stretch reads MRTLWIMAVLLVGVEG. Disulfide bonds link Cys42/Cys131, Cys44/Cys60, Cys59/Cys111, Cys65/Cys138, Cys66/Cys104, Cys73/Cys97, and Cys91/Cys102. Positions 43, 45, and 47 each coordinate Ca(2+). Residue His63 is part of the active site. Residue Asp64 participates in Ca(2+) binding. The active site involves Asp105.

Belongs to the phospholipase A2 family. Group II subfamily. D49 sub-subfamily. Monomer. Homodimer; non-covalently linked (alternative/compact dimer conformation). Requires Ca(2+) as cofactor. In terms of tissue distribution, expressed by the venom gland.

It is found in the secreted. It carries out the reaction a 1,2-diacyl-sn-glycero-3-phosphocholine + H2O = a 1-acyl-sn-glycero-3-phosphocholine + a fatty acid + H(+). High level of membrane cholesterol content reduces cytolytic activity, whereas low level of membrane cholesterol content increases cytolytic activity. Functionally, snake venom phospholipase A2 (PLA2) that displays local myotoxic activity. It also displays anticoagulant action in plasma and edema-inducing activities. In addition, it shows cytotoxic activity to a variety of cell types and bactericidal activity to a variety of Gram-negative and Gram-positive bacteria. PLA2 catalyzes the calcium-dependent hydrolysis of the 2-acyl groups in 3-sn-phosphoglycerides. In Bothrops asper (Terciopelo), this protein is Basic phospholipase A2 myotoxin I.